A 669-amino-acid chain; its full sequence is Putative heme-binding protein rrnAC3100 (669 aa).

H181 provides a ligand contact to heme. Disordered stretches follow at residues 260 to 351 (RVPT…PDVS) and 451 to 477 (LGGSLGEGVEGSETADDSDAQAAESSQ). One can recognise an ABM domain in the interval 579 to 667 (GTMGMFYTVK…VLADRPRHVF (89 aa)).

In the N-terminal section; belongs to the ChdC family.

This Haloarcula marismortui (strain ATCC 43049 / DSM 3752 / JCM 8966 / VKM B-1809) (Halobacterium marismortui) protein is Putative heme-binding protein rrnAC3100.